The following is a 339-amino-acid chain: Diacylglycerol acyltransferase/mycolyltransferase Ag85A (339 aa).

A signal peptide spans 1–43 (MKLVDRFRGAVTGMPRRLMVGAVGAALLSGLVGFVGGSATASA). 85-86 (MR) lines the substrate pocket. A fibronectin-binding region spans residues 101-111 (FEWYNQSGISV). A disulfide bond links C130 and C135. 2 residues coordinate substrate: S169 and D197. The active-site Nucleophile is S169. E272 is a catalytic residue. Substrate is bound by residues 274 to 277 (FVRT), K281, and 304 to 306 (HDW). H304 is an active-site residue.

This sequence belongs to the mycobacterial A85 antigen family. In terms of assembly, homodimer.

The protein resides in the secreted. It localises to the cell wall. Its subcellular location is the cytoplasm. The enzyme catalyses an acyl-CoA + a 1,2-diacyl-sn-glycerol = a triacyl-sn-glycerol + CoA. It carries out the reaction 2 alpha,alpha'-trehalose 6-mycolate = alpha,alpha'-trehalose 6,6'-bismycolate + alpha,alpha-trehalose. Functionally, the antigen 85 proteins (FbpA, FbpB, FbpC) are responsible for the high affinity of mycobacteria for fibronectin, a large adhesive glycoprotein, which facilitates the attachment of M.tuberculosis to murine alveolar macrophages (AMs). They also help to maintain the integrity of the cell wall by catalyzing the transfer of mycolic acids to cell wall arabinogalactan, and through the synthesis of alpha,alpha-trehalose dimycolate (TDM, cord factor). They catalyze the transfer of a mycoloyl residue from one molecule of alpha,alpha-trehalose monomycolate (TMM) to another TMM, leading to the formation of TDM. FbpA mediates triacylglycerol (TAG) formation with long-chain acyl-CoA as the acyl donor and 1,2-dipalmitoyl-sn-glycerol (1,2-dipalmitin) as the acyl acceptor. It has a preference for C26:0-CoA over C18:1-CoA. This chain is Diacylglycerol acyltransferase/mycolyltransferase Ag85A (fbpA), found in Mycobacterium gordonae.